The primary structure comprises 511 residues: Maturase K (511 aa).

Belongs to the intron maturase 2 family. MatK subfamily.

The protein localises to the plastid. Its subcellular location is the chloroplast. In terms of biological role, usually encoded in the trnK tRNA gene intron. Probably assists in splicing its own and other chloroplast group II introns. The polypeptide is Maturase K (Adesmia lanata).